A 404-amino-acid chain; its full sequence is Acetate kinase (404 aa).

Mg(2+) is bound at residue asparagine 8. Position 15 (lysine 15) interacts with ATP. Arginine 92 serves as a coordination point for substrate. Aspartate 149 acts as the Proton donor/acceptor in catalysis. Residues 207–211 (HLGSG), 282–284 (DMR), and 327–331 (GIGEN) contribute to the ATP site. Glutamate 378 lines the Mg(2+) pocket.

The protein belongs to the acetokinase family. Homodimer. Mg(2+) is required as a cofactor. Requires Mn(2+) as cofactor.

The protein resides in the cytoplasm. The enzyme catalyses acetate + ATP = acetyl phosphate + ADP. Its pathway is metabolic intermediate biosynthesis; acetyl-CoA biosynthesis; acetyl-CoA from acetate: step 1/2. Functionally, catalyzes the formation of acetyl phosphate from acetate and ATP. Can also catalyze the reverse reaction. This Nitrobacter hamburgensis (strain DSM 10229 / NCIMB 13809 / X14) protein is Acetate kinase.